The primary structure comprises 93 residues: MKDSYISIVIAYLMVTFILVSSMPIEGEKGELGPHRLPCPPGYENYCFNGKCVHVVAQDEPGKPCYSCICDEFYIGERCGTLDLTNPGYFLKG.

The signal sequence occupies residues 1–30 (MKDSYISIVIAYLMVTFILVSSMPIEGEKG). 3 cysteine pairs are disulfide-bonded: C39–C52, C47–C68, and C70–C79. Residues 43 to 80 (YENYCFNGKCVHVVAQDEPGKPCYSCICDEFYIGERCG) form the EGF-like domain.

The protein belongs to the EGF domain peptide family. In terms of tissue distribution, expressed by the venom gland.

The protein localises to the secreted. Ant peptide with probable defensive activity which acts as a potent agonist of the mammalian epidermal growth factor receptor (EGFR). Mimics, both structurally and functionally, vertebrate epidermal growth factor (EGF) peptide hormones. In vivo, intraplantar injection in mice causes long-lasting (several days) hypersensitivity of the injected paw to both mechanical and thermal stimuli. Its long-lasting effect is unusual for venom toxins whose effects are usually immediate. One possible explanation is that it would reduce the duration of a nest attack, discourage future attacks, or enhance the actions of subsequent exposure to other pain-inducing venom peptides. In Rhytidoponera metallica (Australian green-headed ant), this protein is OMEGA-ectatommitoxin(02)-Rm1c.